Here is a 236-residue protein sequence, read N- to C-terminus: Small ribosomal subunit protein eS6 (236 aa).

Ser232 and Ser233 each carry phosphoserine.

Belongs to the eukaryotic ribosomal protein eS6 family. Phosphorylated.

The polypeptide is Small ribosomal subunit protein eS6 (RPS6A) (Candida glabrata (strain ATCC 2001 / BCRC 20586 / JCM 3761 / NBRC 0622 / NRRL Y-65 / CBS 138) (Yeast)).